Here is a 550-residue protein sequence, read N- to C-terminus: Membrane protein of ER body 2 (550 aa).

Residues 46–199 (EFRSKAAATA…SSDSEEKSNL (154 aa)) are disordered. Low complexity-rich tracts occupy residues 80 to 105 (SVSE…SETG) and 112 to 121 (TGSNEENGNN). The span at 122 to 132 (WLESSSTNLPN) shows a compositional bias: polar residues. Positions 134 to 165 (ENKRQRNGEDCEIEEEEENNERSLSDSEEKSN) form a coiled coil. Residues 143 to 152 (DCEIEEEEEN) are compositionally biased toward acidic residues. Basic and acidic residues-rich tracts occupy residues 153–166 (NERS…KSNL) and 185–198 (KNER…EKSN). Helical transmembrane passes span 374 to 394 (STMN…IVLA), 425 to 445 (ILVA…VYAF), 458 to 478 (ISVF…KVYV), and 500 to 520 (SIVV…GEYI). The stretch at 393-418 (LAQNFQDLRNSSDQEKDRYEELLGRR) forms a coiled coil.

This sequence belongs to the CCC1 family. As to quaternary structure, interacts directly or indirectly with NAI2.

It localises to the endoplasmic reticulum membrane. Functionally, may sequester excess cytosolic iron and manganese into endoplasmic reticulum to reduce metal ion toxicity. Not essential for the accumulation of ER body components, including PYK10. The polypeptide is Membrane protein of ER body 2 (MEB2) (Arabidopsis thaliana (Mouse-ear cress)).